A 208-amino-acid chain; its full sequence is Small ribosomal subunit protein uS4 (208 aa).

One can recognise an S4 RNA-binding domain in the interval 98-161 (TRLDNTVYRL…RKIPVIAEAQ (64 aa)).

The protein belongs to the universal ribosomal protein uS4 family. Part of the 30S ribosomal subunit. Contacts protein S5. The interaction surface between S4 and S5 is involved in control of translational fidelity.

One of the primary rRNA binding proteins, it binds directly to 16S rRNA where it nucleates assembly of the body of the 30S subunit. Its function is as follows. With S5 and S12 plays an important role in translational accuracy. In Maridesulfovibrio salexigens (strain ATCC 14822 / DSM 2638 / NCIMB 8403 / VKM B-1763) (Desulfovibrio salexigens), this protein is Small ribosomal subunit protein uS4.